A 114-amino-acid polypeptide reads, in one-letter code: Phosphoribosyl-AMP cyclohydrolase (114 aa).

Residue aspartate 76 participates in Mg(2+) binding. Cysteine 77 contacts Zn(2+). Mg(2+) is bound by residues aspartate 78 and aspartate 80. The Zn(2+) site is built by cysteine 93 and cysteine 100.

The protein belongs to the PRA-CH family. As to quaternary structure, homodimer. Mg(2+) serves as cofactor. It depends on Zn(2+) as a cofactor.

The protein resides in the cytoplasm. It carries out the reaction 1-(5-phospho-beta-D-ribosyl)-5'-AMP + H2O = 1-(5-phospho-beta-D-ribosyl)-5-[(5-phospho-beta-D-ribosylamino)methylideneamino]imidazole-4-carboxamide. It participates in amino-acid biosynthesis; L-histidine biosynthesis; L-histidine from 5-phospho-alpha-D-ribose 1-diphosphate: step 3/9. Catalyzes the hydrolysis of the adenine ring of phosphoribosyl-AMP. This Streptococcus sanguinis (strain SK36) protein is Phosphoribosyl-AMP cyclohydrolase.